We begin with the raw amino-acid sequence, 269 residues long: Indole-3-glycerol phosphate synthase (269 aa).

It belongs to the TrpC family.

The catalysed reaction is 1-(2-carboxyphenylamino)-1-deoxy-D-ribulose 5-phosphate + H(+) = (1S,2R)-1-C-(indol-3-yl)glycerol 3-phosphate + CO2 + H2O. Its pathway is amino-acid biosynthesis; L-tryptophan biosynthesis; L-tryptophan from chorismate: step 4/5. The polypeptide is Indole-3-glycerol phosphate synthase (Roseiflexus sp. (strain RS-1)).